Here is a 77-residue protein sequence, read N- to C-terminus: UPF0291 protein RBAM_017680 (77 aa).

The tract at residues 55–77 (IDPEGNDVTPEKLKREQQKNNLH) is disordered. Residues 63 to 77 (TPEKLKREQQKNNLH) show a composition bias toward basic and acidic residues.

The protein belongs to the UPF0291 family.

It localises to the cytoplasm. In Bacillus velezensis (strain DSM 23117 / BGSC 10A6 / LMG 26770 / FZB42) (Bacillus amyloliquefaciens subsp. plantarum), this protein is UPF0291 protein RBAM_017680.